A 552-amino-acid chain; its full sequence is Protein psiB (552 aa).

The N-terminal stretch at 1–18 is a signal peptide; the sequence is MKLLSVLITFLLATVIYS. An N-linked (GlcNAc...) asparagine glycan is attached at Asn60. One can recognise a PA14 domain in the interval 114 to 255; it reads TYDTTRNIYV…EDYCGVCQGD (142 aa). N-linked (GlcNAc...) asparagine glycosylation is found at Asn281, Asn313, Asn340, Asn365, Asn446, Asn472, and Asn521.

It belongs to the prespore-cell-inducing factor family.

It is found in the secreted. The polypeptide is Protein psiB (psiB) (Dictyostelium discoideum (Social amoeba)).